We begin with the raw amino-acid sequence, 145 residues long: Class I hydrophobin 1 (145 aa).

A signal peptide spans 1–19 (MKFSYAIAAVVAAAASVQA). Cystine bridges form between Cys65-Cys126, Cys72-Cys120, Cys73-Cys106, and Cys127-Cys140. N-linked (GlcNAc...) asparagine glycosylation is found at Asn80 and Asn129.

Belongs to the fungal hydrophobin family. In terms of assembly, self-assembles to form functional amyloid fibrils called rodlets. Self-assembly into fibrillar rodlets occurs spontaneously at hydrophobic:hydrophilic interfaces and the rodlets further associate laterally to form amphipathic monolayers.

The protein resides in the secreted. Its subcellular location is the cell wall. Aerial growth, conidiation, and dispersal of filamentous fungi in the environment rely upon a capability of their secreting small amphipathic proteins called hydrophobins (HPBs) with low sequence identity. Class I can self-assemble into an outermost layer of rodlet bundles on aerial cell surfaces, conferring cellular hydrophobicity that supports fungal growth, development and dispersal; whereas Class II form highly ordered films at water-air interfaces through intermolecular interactions but contribute nothing to the rodlet structure. Hyd1 is a class I hydrophobin that is crucial for the initiation of primordia formation. Plays also important roles in nitrogen regulation and resistance to abiotic stresses. This chain is Class I hydrophobin 1, found in Ganoderma lucidum (Ling zhi medicinal fungus).